A 197-amino-acid polypeptide reads, in one-letter code: Holliday junction branch migration complex subunit RuvA (197 aa).

The segment at methionine 1–leucine 64 is domain I. The tract at residues threonine 65–glutamine 143 is domain II. The interval isoleucine 144 to valine 148 is flexible linker. A domain III region spans residues threonine 149–lysine 197.

The protein belongs to the RuvA family. In terms of assembly, homotetramer. Forms an RuvA(8)-RuvB(12)-Holliday junction (HJ) complex. HJ DNA is sandwiched between 2 RuvA tetramers; dsDNA enters through RuvA and exits via RuvB. An RuvB hexamer assembles on each DNA strand where it exits the tetramer. Each RuvB hexamer is contacted by two RuvA subunits (via domain III) on 2 adjacent RuvB subunits; this complex drives branch migration. In the full resolvosome a probable DNA-RuvA(4)-RuvB(12)-RuvC(2) complex forms which resolves the HJ.

It localises to the cytoplasm. Functionally, the RuvA-RuvB-RuvC complex processes Holliday junction (HJ) DNA during genetic recombination and DNA repair, while the RuvA-RuvB complex plays an important role in the rescue of blocked DNA replication forks via replication fork reversal (RFR). RuvA specifically binds to HJ cruciform DNA, conferring on it an open structure. The RuvB hexamer acts as an ATP-dependent pump, pulling dsDNA into and through the RuvAB complex. HJ branch migration allows RuvC to scan DNA until it finds its consensus sequence, where it cleaves and resolves the cruciform DNA. This Clostridium botulinum (strain Loch Maree / Type A3) protein is Holliday junction branch migration complex subunit RuvA.